Reading from the N-terminus, the 224-residue chain is Redox-sensing transcriptional repressor Rex (224 aa).

The segment at residues 17-56 is a DNA-binding region (H-T-H motif); sequence RYHRCLEELLKNDIKRISSKELSERMGVTASQIRQDLNNF. An NAD(+)-binding site is contributed by 91 to 96; the sequence is GAGNLG.

It belongs to the transcriptional regulatory Rex family. Homodimer.

It is found in the cytoplasm. Functionally, modulates transcription in response to changes in cellular NADH/NAD(+) redox state. This chain is Redox-sensing transcriptional repressor Rex, found in Caldanaerobacter subterraneus subsp. tengcongensis (strain DSM 15242 / JCM 11007 / NBRC 100824 / MB4) (Thermoanaerobacter tengcongensis).